Consider the following 572-residue polypeptide: Alpha-1D adrenergic receptor (572 aa).

Residues methionine 1–alanine 77 are disordered. The Extracellular segment spans residues methionine 1–glutamine 95. Gly residues-rich tracts occupy residues serine 23–glycine 33 and alanine 42–serine 61. Asparagine 65 and asparagine 82 each carry an N-linked (GlcNAc...) asparagine glycan. The chain crosses the membrane as a helical span at residues glycine 96–valine 121. Topologically, residues alanine 122–tyrosine 133 are cytoplasmic. A helical transmembrane segment spans residues phenylalanine 134–leucine 159. The Extracellular portion of the chain corresponds to glycine 160–cysteine 169. The helical transmembrane segment at aspartate 170–valine 192 threads the bilayer. At aspartate 193–alanine 213 the chain is on the cytoplasmic side. A helical membrane pass occupies residues alanine 214 to proline 238. At valine 239–glutamate 251 the chain is on the extracellular side. A helical membrane pass occupies residues alanine 252 to cysteine 275. Residues arginine 276–lysine 348 are Cytoplasmic-facing. A helical membrane pass occupies residues threonine 349–leucine 373. Residues phenylalanine 374–serine 380 lie on the Extracellular side of the membrane. The helical transmembrane segment at glutamate 381–serine 405 threads the bilayer. Residues serine 406–isoleucine 572 are Cytoplasmic-facing. Cysteine 419 carries S-palmitoyl cysteine lipidation. The tract at residues glycine 444–arginine 488 is disordered. The span at alanine 450–proline 468 shows a compositional bias: low complexity.

The protein belongs to the G-protein coupled receptor 1 family. Adrenergic receptor subfamily. ADRA1D sub-subfamily. As to quaternary structure, interacts with FLNA (via filamin repeat 21); increases PKA-mediated phosphorylation of FLNA. Post-translationally, palmitoylated. Palmitoylation by ZDHHC21 may increase the expression of the receptor and regulate downstream signaling.

The protein resides in the cell membrane. Functionally, this alpha-adrenergic receptor mediates its effect through the influx of extracellular calcium. This Homo sapiens (Human) protein is Alpha-1D adrenergic receptor (ADRA1D).